Here is a 460-residue protein sequence, read N- to C-terminus: 3-isopropylmalate dehydratase large subunit (460 aa).

Residues Cys338, Cys398, and Cys401 each contribute to the [4Fe-4S] cluster site.

The protein belongs to the aconitase/IPM isomerase family. LeuC type 1 subfamily. Heterodimer of LeuC and LeuD. [4Fe-4S] cluster serves as cofactor.

The catalysed reaction is (2R,3S)-3-isopropylmalate = (2S)-2-isopropylmalate. The protein operates within amino-acid biosynthesis; L-leucine biosynthesis; L-leucine from 3-methyl-2-oxobutanoate: step 2/4. Its function is as follows. Catalyzes the isomerization between 2-isopropylmalate and 3-isopropylmalate, via the formation of 2-isopropylmaleate. The protein is 3-isopropylmalate dehydratase large subunit of Streptococcus thermophilus (strain CNRZ 1066).